A 312-amino-acid polypeptide reads, in one-letter code: Golgi to ER traffic protein 2 (312 aa).

Over 1-175 the chain is Cytoplasmic; sequence MSDSPSISAE…VQYNTYRHQV (175 aa). The helical transmembrane segment at 176 to 196 threads the bilayer; that stretch reads WKFRFLAVRYFALLANFIYHF. Topologically, residues 197–224 are lumenal; the sequence is YIIGDSISFASSSHQFIRELIPVEPARS. The helical transmembrane segment at 225 to 244 threads the bilayer; it reads FFTLFSTIEVVIIASYYFLG. Topologically, residues 245–288 are cytoplasmic; the sequence is TKEGFFSTATSNNFVVKLLDMGSMVLPQLQQFKTIAVRLLGYYE. Residues 289-309 form a helical membrane-spanning segment; that stretch reads LLAVLLGDLSLVVVLFGLHSV. Residues 310 to 312 lie on the Lumenal side of the membrane; it reads LGN.

Belongs to the GET2 family. In terms of assembly, component of the Golgi to ER traffic (GET) complex, which is composed of GET1, GET2 and GET3. Within the complex, GET1 and GET2 form a heterotetramer which is stabilized by phosphatidylinositol binding and which binds to the GET3 homodimer.

The protein localises to the endoplasmic reticulum membrane. It is found in the golgi apparatus membrane. Its function is as follows. Required for the post-translational delivery of tail-anchored (TA) proteins to the endoplasmic reticulum. Together with GET1, acts as a membrane receptor for soluble GET3, which recognizes and selectively binds the transmembrane domain of TA proteins in the cytosol. The GET complex cooperates with the HDEL receptor ERD2 to mediate the ATP-dependent retrieval of resident ER proteins that contain a C-terminal H-D-E-L retention signal from the Golgi to the ER. The chain is Golgi to ER traffic protein 2 from Scheffersomyces stipitis (strain ATCC 58785 / CBS 6054 / NBRC 10063 / NRRL Y-11545) (Yeast).